The following is a 378-amino-acid chain: Polar flagellin B/D (378 aa).

Coiled-coil stretches lie at residues 103–128 (SNSK…RIAE) and 311–340 (AFQN…IKDT).

Belongs to the bacterial flagellin family. In terms of assembly, heteromer of multiple flagellin subunits including FlaA, FlaB/D, FlaC, FlaE and FlaF.

The protein localises to the secreted. Its subcellular location is the bacterial flagellum. Flagellin is the subunit protein which polymerizes to form the filaments of bacterial flagella. FlaB/D is not essential for polar flagellar synthesis and swimming motility. Homomer of FlaB/D is not able to form a functional filament. The protein is Polar flagellin B/D (flaB) of Vibrio parahaemolyticus serotype O3:K6 (strain RIMD 2210633).